An 82-amino-acid polypeptide reads, in one-letter code: Small ribosomal subunit protein uS17 (82 aa).

The protein belongs to the universal ribosomal protein uS17 family. Part of the 30S ribosomal subunit.

Its function is as follows. One of the primary rRNA binding proteins, it binds specifically to the 5'-end of 16S ribosomal RNA. The polypeptide is Small ribosomal subunit protein uS17 (Aeromonas salmonicida (strain A449)).